Consider the following 101-residue polypeptide: Large ribosomal subunit protein uL24 (101 aa).

The protein belongs to the universal ribosomal protein uL24 family. In terms of assembly, part of the 50S ribosomal subunit.

In terms of biological role, one of two assembly initiator proteins, it binds directly to the 5'-end of the 23S rRNA, where it nucleates assembly of the 50S subunit. One of the proteins that surrounds the polypeptide exit tunnel on the outside of the subunit. This is Large ribosomal subunit protein uL24 from Jannaschia sp. (strain CCS1).